The sequence spans 261 residues: 1-(5-phosphoribosyl)-5-[(5-phosphoribosylamino)methylideneamino] imidazole-4-carboxamide isomerase (261 aa).

D15 functions as the Proton acceptor in the catalytic mechanism. D136 acts as the Proton donor in catalysis.

Belongs to the HisA/HisF family.

It is found in the cytoplasm. The catalysed reaction is 1-(5-phospho-beta-D-ribosyl)-5-[(5-phospho-beta-D-ribosylamino)methylideneamino]imidazole-4-carboxamide = 5-[(5-phospho-1-deoxy-D-ribulos-1-ylimino)methylamino]-1-(5-phospho-beta-D-ribosyl)imidazole-4-carboxamide. It functions in the pathway amino-acid biosynthesis; L-histidine biosynthesis; L-histidine from 5-phospho-alpha-D-ribose 1-diphosphate: step 4/9. This is 1-(5-phosphoribosyl)-5-[(5-phosphoribosylamino)methylideneamino] imidazole-4-carboxamide isomerase from Synechococcus sp. (strain JA-2-3B'a(2-13)) (Cyanobacteria bacterium Yellowstone B-Prime).